An 81-amino-acid polypeptide reads, in one-letter code: ATP synthase subunit c, chloroplastic (81 aa).

Helical transmembrane passes span 4 to 24 and 57 to 77; these read VISA…SIGP and LAFM…LLFA.

It belongs to the ATPase C chain family. As to quaternary structure, F-type ATPases have 2 components, F(1) - the catalytic core - and F(0) - the membrane proton channel. F(1) has five subunits: alpha(3), beta(3), gamma(1), delta(1), epsilon(1). F(0) has four main subunits: a(1), b(1), b'(1) and c(10-14). The alpha and beta chains form an alternating ring which encloses part of the gamma chain. F(1) is attached to F(0) by a central stalk formed by the gamma and epsilon chains, while a peripheral stalk is formed by the delta, b and b' chains.

Its subcellular location is the plastid. It is found in the chloroplast thylakoid membrane. In terms of biological role, f(1)F(0) ATP synthase produces ATP from ADP in the presence of a proton or sodium gradient. F-type ATPases consist of two structural domains, F(1) containing the extramembraneous catalytic core and F(0) containing the membrane proton channel, linked together by a central stalk and a peripheral stalk. During catalysis, ATP synthesis in the catalytic domain of F(1) is coupled via a rotary mechanism of the central stalk subunits to proton translocation. Functionally, key component of the F(0) channel; it plays a direct role in translocation across the membrane. A homomeric c-ring of between 10-14 subunits forms the central stalk rotor element with the F(1) delta and epsilon subunits. The polypeptide is ATP synthase subunit c, chloroplastic (Zygnema circumcarinatum (Green alga)).